A 643-amino-acid polypeptide reads, in one-letter code: Threonine--tRNA ligase (643 aa).

The TGS domain maps to 1 to 61 (MPIITLPDGS…EQDATLEIIT (61 aa)). Positions 243–534 (DHRKIGKALD…ITEEYAGFFP (292 aa)) are catalytic. The Zn(2+) site is built by cysteine 334, histidine 385, and histidine 511.

Belongs to the class-II aminoacyl-tRNA synthetase family. As to quaternary structure, homodimer. It depends on Zn(2+) as a cofactor.

The protein localises to the cytoplasm. The catalysed reaction is tRNA(Thr) + L-threonine + ATP = L-threonyl-tRNA(Thr) + AMP + diphosphate + H(+). Its function is as follows. Catalyzes the attachment of threonine to tRNA(Thr) in a two-step reaction: L-threonine is first activated by ATP to form Thr-AMP and then transferred to the acceptor end of tRNA(Thr). Also edits incorrectly charged L-seryl-tRNA(Thr). This is Threonine--tRNA ligase from Haemophilus influenzae (strain 86-028NP).